A 297-amino-acid polypeptide reads, in one-letter code: MSLKCETERSKTWNNFGNGIPCVLGIDEAGRGPVLGPMVYAAAISPLDQNVELKNLGVDDSKALNEAKREEIFNKMNEDEDIQQIIAYALRCLSPELISCSMLKRQKYSLNEVSHEAAITLIRDALACNVNVVEIKVDTVGPKATYQAKLEKLFPGISICVTEKADSLFPIVSAASIAAKVTRDSRLRNWQFREKNIKVPDAGYGSGYPGDPNTKKFLQLSVEPVFGFCSLVRSSWKTASTIVEKRCVPGSWEDDEEEGKSQSKRMTSWMVPKNETEVVPKRNVYFKERHMSNILTF.

In terms of domain architecture, RNase H type-2 spans 21 to 248 (PCVLGIDEAG…ASTIVEKRCV (228 aa)). Residues aspartate 27, glutamate 28, and aspartate 138 each contribute to the a divalent metal cation site.

This sequence belongs to the RNase HII family. Eukaryotic subfamily. Mn(2+) serves as cofactor. It depends on Mg(2+) as a cofactor.

The catalysed reaction is Endonucleolytic cleavage to 5'-phosphomonoester.. Catalytic subunit of RNase HII, an endonuclease that specifically degrades the RNA of RNA:DNA hybrids. Participates in DNA replication, possibly by mediating the removal of lagging-strand Okazaki fragment RNA primers during DNA replication. Mediates the excision of single ribonucleotides from DNA:RNA duplexes. This is Ribonuclease H2 subunit A (rnh-2) from Caenorhabditis elegans.